We begin with the raw amino-acid sequence, 490 residues long: MAATTTEKKQLRIATRNCGFIDPESIDDYIALRGYEGLAKVLTMTPAEVVDLVKRSGLRGRGGAGFPTGIKWGIALGNKADQKYMVCNADEGDPEFMDRAVLEGDPHSVVEAMAIGGYAIGATRGTVYIRAEYPLAIKRLKKAIDDAREYGLLGENIFGSGFDFDIELKYGAGAFVCGEETALIRSMEGKRGEPVTKPPFPAQSGYWEKPTIVNNVETFANIPAIIINGADWFSGIGTATSKGTKVFALAGKIQNVGLIEVPMGISLREVIFDIGGGCPDGKAFKAVQTGGPSGGALANKDLDVAIDYESLAACKSIMGSGGMVVMDEDDCMVSVAKFFLDFTMDETCGKCTPCRIGSKRLYEILDRITKGKGTRADLDRLKSLSEIIKDTALCGLGQTMPNPILSTMDTFANEYEAHVDDKKCPAHVCTALLTYTIDPAKCTGCGLCTRVCPVECISGTKKQPHTIDTTRCIKCGACYDKCKFDSIIKQ.

4Fe-4S ferredoxin-type domains follow at residues 433-462 and 463-490; these read LTYT…GTKK and QPHT…IIKQ.

This sequence belongs to the complex I 51 kDa subunit family. In terms of assembly, heterotetramer composed of HndA, HndB, HndC and HndD subunits. HndC is probably the reducing subunit.

It carries out the reaction H2 + NADP(+) = NADPH + H(+). Inhibited by oxygen. Functionally, catalyzes the reduction of NADP in the presence of molecular H2 to yield NADPH. This chain is NADP-reducing hydrogenase subunit HndC (hndC), found in Solidesulfovibrio fructosivorans (Desulfovibrio fructosivorans).